The following is a 121-amino-acid chain: Large ribosomal subunit protein bL20 (121 aa).

This sequence belongs to the bacterial ribosomal protein bL20 family.

Its function is as follows. Binds directly to 23S ribosomal RNA and is necessary for the in vitro assembly process of the 50S ribosomal subunit. It is not involved in the protein synthesizing functions of that subunit. In Ruegeria pomeroyi (strain ATCC 700808 / DSM 15171 / DSS-3) (Silicibacter pomeroyi), this protein is Large ribosomal subunit protein bL20.